The chain runs to 404 residues: Rhomboid-related protein 3 (404 aa).

2 EF-hand domains span residues 34–69 (APEDHWKVLFEKFDPGSTGYISTGKFRSLLESHSSK) and 70–105 (LDPHKKEVLLALADSHADGQICYQDFVNLMSNKRSN). A run of 7 helical transmembrane segments spans residues 164 to 184 (WFMITITLLEVALFLYNGVLL), 227 to 247 (LGLNVALQLLVGVPLEMVHGA), 250 to 270 (IGLVYVAGVVAGSLAVSVADM), 274 to 294 (VVGSSGGVYALVSAHLANIVM), 305 to 324 (LLRMAVALICMSMEFGRAVW), 338 to 358 (PSFVAHLGGVAVGITLGVVVL), and 371 to 391 (WWIFVTMYTIFVLFAVFWNIF). S278 (nucleophile) is an active-site residue. Residue H343 is part of the active site.

The protein belongs to the peptidase S54 family.

It localises to the membrane. The enzyme catalyses Cleaves type-1 transmembrane domains using a catalytic dyad composed of serine and histidine that are contributed by different transmembrane domains.. May be involved in regulated intramembrane proteolysis and the subsequent release of functional polypeptides from their membrane anchors. The protein is Rhomboid-related protein 3 (Rhbdl3) of Mus musculus (Mouse).